We begin with the raw amino-acid sequence, 362 residues long: Histidinol-phosphate aminotransferase (362 aa).

Position 218 is an N6-(pyridoxal phosphate)lysine (K218).

Belongs to the class-II pyridoxal-phosphate-dependent aminotransferase family. Histidinol-phosphate aminotransferase subfamily. As to quaternary structure, homodimer. Requires pyridoxal 5'-phosphate as cofactor.

It catalyses the reaction L-histidinol phosphate + 2-oxoglutarate = 3-(imidazol-4-yl)-2-oxopropyl phosphate + L-glutamate. It functions in the pathway amino-acid biosynthesis; L-histidine biosynthesis; L-histidine from 5-phospho-alpha-D-ribose 1-diphosphate: step 7/9. The protein is Histidinol-phosphate aminotransferase of Ruegeria sp. (strain TM1040) (Silicibacter sp.).